The sequence spans 1228 residues: AT-rich interactive domain-containing protein 4B (1228 aa).

Disordered stretches follow at residues 123-167 and 266-307; these read LPLT…DDRK and KTEL…PFPE. Phosphoserine occurs at positions 276, 295, and 296. Positions 277–305 are enriched in acidic residues; it reads EAEEEEEEEDDEKEKEDNSSEEEEEIEPF. Positions 306-398 constitute an ARID domain; sequence PEERENFLQQ…YLYGFEEYCR (93 aa). Residues Lys428 and Lys461 each participate in a glycyl lysine isopeptide (Lys-Gly) (interchain with G-Cter in SUMO2) cross-link. A compositionally biased stretch (basic and acidic residues) spans 437-464; sequence EVNVEDSKNMIPKEETPAEDESERKENI. Disordered stretches follow at residues 437–466, 479–525, 539–606, 620–802, 825–1129, and 1168–1204; these read EVNVEDSKNMIPKEETPAEDESERKENIKP, PAQS…EQAR, RPAD…SDTG, LQAS…EEKR, LNNS…RLPK, and SEVASIDRRRKRLKKKERESAATSSSSSSPSSSSITA. Position 482 is a phosphoserine (Ser482). The span at 483-511 shows a compositional bias: basic and acidic residues; the sequence is DQEKEANITKLEEKESLEDKDGATARAEE. Basic residues predominate over residues 546–555; that stretch reads PKIKHRKKIK. Residues 556–569 are compositionally biased toward basic and acidic residues; the sequence is NKLDKEKDRDEKYS. Phosphoserine occurs at positions 579, 581, and 588. Residues 596–606 show a composition bias toward basic and acidic residues; that stretch reads DLADAKNSDTG. Ser630 bears the Phosphoserine mark. 2 stretches are compositionally biased toward basic and acidic residues: residues 635 to 667 and 691 to 700; these read ERCAQDPESSSKDESKVEHSAHSRSELISKEEL and SPERLRKDVE. Lys664 is covalently cross-linked (Glycyl lysine isopeptide (Lys-Gly) (interchain with G-Cter in SUMO2)). 2 positions are modified to phosphoserine: Ser691 and Ser703. The segment covering 701-713 has biased composition (acidic residues); that stretch reads AISEDTDFEEEDE. Thr706 carries the phosphothreonine modification. Residues 721 to 730 are compositionally biased toward basic and acidic residues; the sequence is VKKDTTDKAL. The segment covering 744-753 has biased composition (polar residues); the sequence is IQTNCLQSGS. Composition is skewed to basic and acidic residues over residues 755 to 765, 825 to 843, and 911 to 926; these read GKKEDRTKSKE, LNNSDERLQNNRAKDRKDV, and KPVEEKPLEVSDRKTE. Residues 927–937 are compositionally biased toward polar residues; the sequence is FPSSGSNSVLN. Residue Ser930 is modified to Phosphoserine. Thr942 is modified (phosphothreonine). A compositionally biased stretch (low complexity) spans 944 to 965; it reads ESPSSVTVTETSQQQSSVTVSV. Ser945 carries the phosphoserine modification. Residues 972–981 show a composition bias toward basic and acidic residues; the sequence is EEVRSIKSET. The segment covering 1003–1017 has biased composition (low complexity); the sequence is SSPAGFNASVSSSSS. A compositionally biased stretch (basic residues) spans 1046-1064; it reads KKQKRSHKATVVNNKKKGK. Thr1066 carries the post-translational modification Phosphothreonine. Ser1068, Ser1069, Ser1071, and Ser1075 each carry phosphoserine. The segment covering 1112–1124 has biased composition (basic and acidic residues); the sequence is KNGDKDPDLKEPS. A coiled-coil region spans residues 1141-1186; the sequence is ENMTSAERISILQEKLQEIRKHYLSLKSEVASIDRRRKRLKKKERE. The span at 1188–1204 shows a compositional bias: low complexity; the sequence is AATSSSSSSPSSSSITA.

As to quaternary structure, component of a Sin3A corepressor complex consisting of SIN3A, SAP130, SUDS3/SAP45, SAP180, HDAC1 and HDAC2. Interacts with ARID4A. Interacts with AR.

The protein resides in the nucleus. Acts as a transcriptional repressor. May function in the assembly and/or enzymatic activity of the Sin3A corepressor complex or in mediating interactions between the complex and other regulatory complexes. Plays a role in the regulation of epigenetic modifications at the PWS/AS imprinting center near the SNRPN promoter, where it might function as part of a complex with RB1 and ARID4A. Involved in spermatogenesis, together with ARID4A, where it functions as a transcriptional coactivator for AR (androgen receptor) and enhances expression of genes required for sperm maturation. Regulates expression of the tight junction protein CLDN3 in the testis, which is important for integrity of the blood-testis barrier. Plays a role in myeloid homeostasis where it regulates the histone methylation state of bone marrow cells and expression of various genes involved in hematopoiesis. May function as a leukemia suppressor. This is AT-rich interactive domain-containing protein 4B (Arid4b) from Rattus norvegicus (Rat).